Reading from the N-terminus, the 283-residue chain is N-terminal Xaa-Pro-Lys N-methyltransferase 2 (283 aa).

S-adenosyl-L-methionine-binding positions include glycine 124, arginine 129, aspartate 146, 174–175, and glutamine 190; that span reads LQ.

Belongs to the methyltransferase superfamily. NTM1 family.

The protein localises to the nucleus. The catalysed reaction is N-terminal L-alanyl-L-prolyl-L-lysyl-[protein] + S-adenosyl-L-methionine = N-terminal N-methyl-L-alanyl-L-prolyl-L-lysyl-[protein] + S-adenosyl-L-homocysteine + H(+). It catalyses the reaction N-terminal L-prolyl-L-prolyl-L-lysyl-[protein] + S-adenosyl-L-methionine = N-terminal N-methyl-L-prolyl-L-prolyl-L-lysyl-[protein] + S-adenosyl-L-homocysteine + H(+). The enzyme catalyses N-terminal L-seryl-L-prolyl-L-lysyl-[protein] + S-adenosyl-L-methionine = N-terminal N-methyl-L-seryl-L-prolyl-L-lysyl-[protein] + S-adenosyl-L-homocysteine + H(+). Its function is as follows. Alpha N-methyltransferase that methylates the N-terminus of target proteins containing the N-terminal motif [Ala/Pro/Ser]-Pro-Lys when the initiator Met is cleaved. Specifically catalyzes monomethylation of exposed alpha-amino group of Ala or Ser residue in the [Ala/Ser]-Pro-Lys motif and Pro in the Pro-Pro-Lys motif. Predominantly functions as a mono-methyltransferase but is also able to di-/tri-methylate the GPKRIA peptide and di-methylate the PPKRIA peptide (in vitro). May activate NTMT1 by priming its substrates for trimethylation. In Mus musculus (Mouse), this protein is N-terminal Xaa-Pro-Lys N-methyltransferase 2 (Ntmt2).